Consider the following 667-residue polypeptide: Protein-glutamine gamma-glutamyltransferase 4 (667 aa).

N-linked (GlcNAc...) asparagine glycosylation is found at Asn-151, Asn-220, and Asn-227. Residues Cys-256, His-315, and Asp-338 contribute to the active site. Positions 378 and 380 each coordinate Ca(2+). Asn-408 is a glycosylation site (N-linked (GlcNAc...) asparagine). Residues Glu-430 and Glu-435 each coordinate Ca(2+). Positions 430-449 (EGSPEERKAMEKASGKRPDD) are disordered. Asn-472 and Asn-488 each carry an N-linked (GlcNAc...) asparagine glycan.

This sequence belongs to the transglutaminase superfamily. Transglutaminase family. In terms of assembly, homodimer. The cofactor is Ca(2+). In terms of processing, the N-terminus is blocked. Post-translationally, probably linked to the cell membrane via a lipid-anchor, possibly a GPI-anchor. N-glycosylated on 2 Asn residues by a high mannose oligosaccharide consisting of five mannose residues and a fucosylated biantennary complex glycan. Expressed in the coagulating gland, the dorsal part of the prostate and in semen (at protein level). Expressed at low levels in the lateral prostate and seminal vesicle. Not expressed in the epididymis, kidney, liver, serum, sperm plug, testes and ventral prostate.

The protein localises to the secreted. It is found in the cell membrane. The enzyme catalyses L-glutaminyl-[protein] + L-lysyl-[protein] = [protein]-L-lysyl-N(6)-5-L-glutamyl-[protein] + NH4(+). Functionally, associated with the mammalian reproductive process. Plays an important role in the formation of the seminal coagulum through the cross-linking of specific proteins present in the seminal plasma. Transglutaminase is also required to stabilize the copulatory plug. This is Protein-glutamine gamma-glutamyltransferase 4 (Tgm4) from Rattus norvegicus (Rat).